Consider the following 294-residue polypeptide: Kynurenine formamidase (294 aa).

Basic and acidic residues predominate over residues 1–14 (MSRWKDMNKDELER). The disordered stretch occupies residues 1–20 (MSRWKDMNKDELERQFSPSQ). An HGGXW motif is present at residues 84–88 (HGGYW). S153 acts as the Nucleophile in catalysis. Residues D236 and H269 contribute to the active site.

Belongs to the kynurenine formamidase family. As to quaternary structure, homodimer.

It localises to the cytoplasm. The protein resides in the cytosol. It is found in the nucleus. It catalyses the reaction N-formyl-L-kynurenine + H2O = L-kynurenine + formate + H(+). It functions in the pathway amino-acid degradation; L-tryptophan degradation via kynurenine pathway; L-kynurenine from L-tryptophan: step 2/2. Functionally, catalyzes the hydrolysis of N-formyl-L-kynurenine to L-kynurenine, the second step in the kynurenine pathway of tryptophan degradation. Kynurenine may be further oxidized to nicotinic acid, NAD(H) and NADP(H). Required for elimination of toxic metabolites. The polypeptide is Kynurenine formamidase (afmid) (Salmo salar (Atlantic salmon)).